A 289-amino-acid chain; its full sequence is Tumor necrosis factor receptor superfamily member 5 (289 aa).

A signal peptide spans 1–19 (MVSLPRLCALWGCLLTAVH). At 20 to 193 (LGQCVTCSDK…VICGLKSRMR (174 aa)) the chain is on the extracellular side. TNFR-Cys repeat units follow at residues 25–60 (TCSD…TQCH), 61–103 (PCDS…DTVC), 104–144 (TCKE…TVCH), and 145–187 (PCPV…VICG). 8 cysteine pairs are disulfide-bonded: C26-C37, C38-C51, C41-C59, C62-C77, C83-C103, C105-C119, C111-C116, and C125-C143. N153 carries N-linked (GlcNAc...) asparagine glycosylation. Residues 194 to 215 (ALLVIPVVMGILITIFGVFLYI) form a helical membrane-spanning segment. The Cytoplasmic segment spans residues 216-289 (KKVVKKPKDN…TDSIALRPLV (74 aa)). The disordered stretch occupies residues 228–251 (LPPAARRQDPQEMEDYPGHNTAAP).

As to quaternary structure, monomer and homodimer. Interacts with TRAF1, TRAF2 and TRAF6. Interacts with TRAF3 and TRAF5. Interacts with TRAF6 and MAP3K8; the interaction is required for ERK activation.

It localises to the cell membrane. The protein resides in the secreted. Functionally, receptor for TNFSF5/CD40LG. Transduces TRAF6- and MAP3K8-mediated signals that activate ERK in macrophages and B cells, leading to induction of immunoglobulin secretion. The protein is Tumor necrosis factor receptor superfamily member 5 (Cd40) of Mus musculus (Mouse).